Reading from the N-terminus, the 360-residue chain is Mannitol-1-phosphate 5-dehydrogenase (360 aa).

NAD(+) is bound at residue 6–17 (ALHFGAGNIGRG).

The protein belongs to the mannitol dehydrogenase family.

It carries out the reaction D-mannitol 1-phosphate + NAD(+) = beta-D-fructose 6-phosphate + NADH + H(+). This chain is Mannitol-1-phosphate 5-dehydrogenase, found in Mycoplasmopsis pulmonis (strain UAB CTIP) (Mycoplasma pulmonis).